The chain runs to 328 residues: Homeobox protein Hox-C13 (328 aa).

The disordered stretch occupies residues 23–48; that stretch reads AAESGSGGGGGGGGAGGAGGGCSGAS. Positions 27 to 45 are enriched in gly residues; sequence GSGGGGGGGGAGGAGGGCS. The segment at residues 258-317 is a DNA-binding region (homeobox); that stretch reads GRKKRVPYTKVQLKELEKEYAASKFITKEKRRRISATTNLSERQVTIWFQNRRVKEKKVV.

This sequence belongs to the Abd-B homeobox family. As to expression, expressed in differentiating keratinocytes. In the hair follicle lower matrix, expressed in all 3 hair shaft-forming compartments, i.e. cuticle, cortex and medulla. Expression stops sharply at the boundary with the germinal matrix compartment.

Its subcellular location is the nucleus. Transcription factor which plays a role in hair follicle differentiation. Regulates FOXQ1 expression and that of other hair-specific genes. In Mus musculus (Mouse), this protein is Homeobox protein Hox-C13 (Hoxc13).